Consider the following 107-residue polypeptide: Glutaconyl-CoA decarboxylase subunit delta (107 aa).

A helical membrane pass occupies residues 10-32 (MINMTIVFGVLIVLGILMVLIHA). A disordered region spans residues 37–60 (KKVQGKKKPVVAKPAPSAAASKRQ). The span at 47–57 (VAKPAPSAAAS) shows a compositional bias: low complexity.

The protein belongs to the OadG family. In terms of assembly, heterooctamer consisting of two alpha, two beta, two gamma and two delta subunits.

The protein resides in the cell membrane. It carries out the reaction (2E)-glutaconyl-CoA + Na(+)(in) + H(+) = (2E)-butenoyl-CoA + Na(+)(out) + CO2. The protein operates within amino-acid degradation; L-glutamate degradation via hydroxyglutarate pathway; crotonoyl-CoA from L-glutamate: step 5/5. Its function is as follows. Part of the primary sodium pump glutaconyl-CoA decarboxylase (GCD). Possible membrane anchor for the alpha subunit. The chain is Glutaconyl-CoA decarboxylase subunit delta (gcdD) from Acidaminococcus fermentans (strain ATCC 25085 / DSM 20731 / CCUG 9996 / CIP 106432 / VR4).